Here is a 530-residue protein sequence, read N- to C-terminus: T-complex protein 1 subunit zeta (530 aa).

Residue Gly-38 participates in ADP binding. Gly-38 is an ATP binding site. Mg(2+) is bound at residue Asp-89. 7 residues coordinate ADP: Gly-90, Thr-91, Thr-92, Ser-93, Thr-157, Lys-158, and Ala-410. Residues Gly-90, Thr-91, and Thr-92 each contribute to the ATP site. Positions 410, 411, 495, and 500 each coordinate ATP. Residue Asp-495 participates in ADP binding.

In terms of assembly, component of the chaperonin-containing T-complex (TRiC), a hexadecamer composed of two identical back-to-back stacked rings enclosing a protein folding chamber. Each ring is made up of eight different subunits: TCP1/CCT1, CCT2, CCT3, CCT4, CCT5, CCT6A/CCT6, CCT7, CCT8. Interacts with PACRG.

The protein resides in the cytoplasm. The catalysed reaction is ATP + H2O = ADP + phosphate + H(+). In terms of biological role, component of the chaperonin-containing T-complex (TRiC), a molecular chaperone complex that assists the folding of actin, tubulin and other proteins upon ATP hydrolysis. The chain is T-complex protein 1 subunit zeta from Gallus gallus (Chicken).